We begin with the raw amino-acid sequence, 309 residues long: Ribonuclease Z (309 aa).

Zn(2+) contacts are provided by histidine 63, histidine 65, aspartate 67, histidine 68, histidine 145, aspartate 216, and histidine 274. Aspartate 67 functions as the Proton acceptor in the catalytic mechanism.

Belongs to the RNase Z family. As to quaternary structure, homodimer. Requires Zn(2+) as cofactor.

It catalyses the reaction Endonucleolytic cleavage of RNA, removing extra 3' nucleotides from tRNA precursor, generating 3' termini of tRNAs. A 3'-hydroxy group is left at the tRNA terminus and a 5'-phosphoryl group is left at the trailer molecule.. In terms of biological role, zinc phosphodiesterase, which displays some tRNA 3'-processing endonuclease activity. Probably involved in tRNA maturation, by removing a 3'-trailer from precursor tRNA. This is Ribonuclease Z from Streptococcus equi subsp. zooepidemicus (strain H70).